The sequence spans 387 residues: Peroxisomal membrane protein LPX1 (387 aa).

The interval 385–387 (QKL) is peroxisomal targeting signal type 1.

Its subcellular location is the peroxisome matrix. Functionally, has acyl esterase, lipase and phospholipase A activity. This is Peroxisomal membrane protein LPX1 (LPX1) from Saccharomyces cerevisiae (strain ATCC 204508 / S288c) (Baker's yeast).